An 801-amino-acid chain; its full sequence is Na(+)/H(+) antiporter subunit A1 (801 aa).

21 helical membrane passes run 4–25, 30–49, 79–101, 108–127, 131–153, 166–188, 208–230, 243–265, 270–289, 302–324, 339–361, 373–395, 429–451, 472–494, 526–548, 589–611, 621–641, 646–668, 672–694, 707–729, and 767–784; these read LHIA…YRFF, LGWF…LTLI, LGLL…SIGY, LGNF…GVVL, VIIL…SFWR, LIIT…IPTQ, FIFA…PFYI, SAYL…MTPI, QGWI…WASL, AFST…ISYH, AAIF…TGAV, LGGL…LSMA, YLFP…KFIM, ILML…FPGI, AFLS…SYWV, NNLV…SVPF, IRIF…LILF, LFSI…FFKA, ALTQ…YHLP, LTNA…IAYG, and LFES…YTMI.

The protein belongs to the CPA3 antiporters (TC 2.A.63) subunit A family. As to quaternary structure, may form a heterooligomeric complex that consists of seven subunits: mnhA1, mnhB1, mnhC1, mnhD1, mnhE1, mnhF1 and mnhG1.

It is found in the cell membrane. Na(+) extrusion is completely inhibited by the H(+) conductor carbonyl cyanide m-chlorophenylhydrazone (CCCP). In terms of biological role, mnh complex is a Na(+)/H(+) antiporter involved in Na(+) excretion. This Staphylococcus aureus (strain MRSA252) protein is Na(+)/H(+) antiporter subunit A1 (mnhA1).